The chain runs to 215 residues: Pyrrolidone-carboxylate peptidase (215 aa).

Catalysis depends on residues Glu78, Cys141, and His165.

The protein belongs to the peptidase C15 family. As to quaternary structure, homotetramer.

The protein localises to the cytoplasm. It catalyses the reaction Release of an N-terminal pyroglutamyl group from a polypeptide, the second amino acid generally not being Pro.. Removes 5-oxoproline from various penultimate amino acid residues except L-proline. This Streptococcus pyogenes serotype M3 (strain SSI-1) protein is Pyrrolidone-carboxylate peptidase.